The sequence spans 162 residues: Urease subunit beta (162 aa).

Positions 116–162 (WRRSSAAGDAPQELPQVEAAERGRKLDDATDVDTNVGTEEGFEEGRN) are disordered. The span at 134 to 143 (AAERGRKLDD) shows a compositional bias: basic and acidic residues.

The protein belongs to the urease beta subunit family. As to quaternary structure, heterotrimer of UreA (gamma), UreB (beta) and UreC (alpha) subunits. Three heterotrimers associate to form the active enzyme.

It localises to the cytoplasm. It carries out the reaction urea + 2 H2O + H(+) = hydrogencarbonate + 2 NH4(+). It participates in nitrogen metabolism; urea degradation; CO(2) and NH(3) from urea (urease route): step 1/1. In Corynebacterium glutamicum (strain ATCC 13032 / DSM 20300 / JCM 1318 / BCRC 11384 / CCUG 27702 / LMG 3730 / NBRC 12168 / NCIMB 10025 / NRRL B-2784 / 534), this protein is Urease subunit beta.